A 470-amino-acid polypeptide reads, in one-letter code: Myricetin 3-O-rhamnoside 1,2-glucosyltransferase UGT709G2 (470 aa).

His20 serves as the catalytic Proton acceptor. His20 contacts an anthocyanidin. Asp117 serves as the catalytic Charge relay. The UDP-alpha-D-glucose site is built by Ala340, Gln342, His357, Trp360, Asn361, Ser362, and Glu365. Ala380 contributes to the an anthocyanidin binding site. The UDP-alpha-D-glucose site is built by Asp381 and Gln382.

This sequence belongs to the UDP-glycosyltransferase family. In terms of tissue distribution, expressed in young cromes.

The enzyme catalyses myricetin 3-O-alpha-L-rhamnoside + UDP-alpha-D-glucose = myricetin 3-O-[beta-D-glucosyl-(1-&gt;2)-alpha-L-rhamnoside] + UDP + H(+). Its pathway is flavonoid metabolism. Glucosyltransferase involved in montbretin A (MbA) biosynthesis. Catalyzes the glucosylation of myricetin 3-O-alpha-L-rhamnoside (MR) to produce myricetin 3-O-[beta-D-glucosyl-(1-&gt;2)-alpha-L-rhamnoside] (MRG), a precursor of MbA. MbA is a potent inhibitor of human pancreatic alpha-amylase and is being developed as drug candidate to treat type-2 diabetes. In vitro, is able to transfer UDP-xylose with 50-fold less efficiency compared with UDP-glucose. In vitro, can use myricetin 3-O-glucoside and quercetin 3-O-glucoside as substrates, although these two flavonoids may not be physiological substrates in vivo. This chain is Myricetin 3-O-rhamnoside 1,2-glucosyltransferase UGT709G2, found in Crocosmia x crocosmiiflora (Montbretia).